Consider the following 408-residue polypeptide: Multidrug resistance protein MdtG (408 aa).

Helical transmembrane passes span 13–33 (LYIA…VMPF), 51–71 (LWSG…SPFW), 89–109 (LGMA…QFLL), 112–132 (AALG…AIQV), 138–158 (GWAL…GPLL), 170–190 (PVFF…FFFI), 221–241 (LFVT…ILTL), 253–273 (LAFI…LSAP), 287–307 (ILVA…FVQS), and 375–395 (AVFL…WLSL).

Belongs to the major facilitator superfamily. DHA1 family. MdtG (TC 2.A.1.2.20) subfamily.

Its subcellular location is the cell inner membrane. This chain is Multidrug resistance protein MdtG, found in Dickeya zeae (strain Ech586) (Dickeya dadantii (strain Ech586)).